A 485-amino-acid chain; its full sequence is D-alanine--D-alanyl carrier protein ligase (485 aa).

Residue 144-145 participates in ATP binding; that stretch reads TS. D189 lines the D-alanine pocket. An ATP-binding site is contributed by 284 to 289; that stretch reads NTYGPT. Residue V293 coordinates D-alanine. 2 residues coordinate ATP: D365 and K473. K473 serves as a coordination point for D-alanine.

This sequence belongs to the ATP-dependent AMP-binding enzyme family. DltA subfamily.

It localises to the cytoplasm. The catalysed reaction is holo-[D-alanyl-carrier protein] + D-alanine + ATP = D-alanyl-[D-alanyl-carrier protein] + AMP + diphosphate. The protein operates within cell wall biogenesis; lipoteichoic acid biosynthesis. In terms of biological role, catalyzes the first step in the D-alanylation of lipoteichoic acid (LTA), the activation of D-alanine and its transfer onto the D-alanyl carrier protein (Dcp) DltC. In an ATP-dependent two-step reaction, forms a high energy D-alanyl-AMP intermediate, followed by transfer of the D-alanyl residue as a thiol ester to the phosphopantheinyl prosthetic group of the Dcp. D-alanylation of LTA plays an important role in modulating the properties of the cell wall in Gram-positive bacteria, influencing the net charge of the cell wall. This chain is D-alanine--D-alanyl carrier protein ligase, found in Staphylococcus haemolyticus (strain JCSC1435).